The sequence spans 309 residues: tRNA uridine(34) hydroxylase (309 aa).

One can recognise a Rhodanese domain in the interval 130–225 (RGEEVVFFDG…YGEKYGNDGL (96 aa)). Cys-185 functions as the Cysteine persulfide intermediate in the catalytic mechanism.

This sequence belongs to the TrhO family.

The enzyme catalyses uridine(34) in tRNA + AH2 + O2 = 5-hydroxyuridine(34) in tRNA + A + H2O. Catalyzes oxygen-dependent 5-hydroxyuridine (ho5U) modification at position 34 in tRNAs. This is tRNA uridine(34) hydroxylase from Corynebacterium aurimucosum (strain ATCC 700975 / DSM 44827 / CIP 107346 / CN-1) (Corynebacterium nigricans).